Here is a 296-residue protein sequence, read N- to C-terminus: Nucleotide-binding protein stu0831 (296 aa).

Position 13 to 20 (13 to 20 (GMSGAGKT)) interacts with ATP. 63–66 (DMRS) provides a ligand contact to GTP.

It belongs to the RapZ-like family.

Functionally, displays ATPase and GTPase activities. The polypeptide is Nucleotide-binding protein stu0831 (Streptococcus thermophilus (strain ATCC BAA-250 / LMG 18311)).